We begin with the raw amino-acid sequence, 473 residues long: H(+)/Cl(-) exchange transporter ClcA (473 aa).

Over 1 to 32 (MNTDTPTFEAQQVVRLRRGDLIRRLLQRDKTP) the chain is Cytoplasmic. Residues 33–69 (LAILLTAAVVGTVTGLIGVAFEKAVTWVQNLRIGALV) form a helical membrane-spanning segment. Residues 70–76 (QTADYAI) lie on the Periplasmic side of the membrane. Residues 77 to 100 (LVWPLAFILSALLAMVGYFLVRKF) traverse the membrane as a helical segment. At 101–108 (APEAGGSG) the chain is on the cytoplasmic side. Positions 106-110 (GSGIP) match the Selectivity filter part_1 motif. Ser107 is a binding site for chloride. Residues 109-116 (IPEIEGAL) constitute an intramembrane region (helical). The Cytoplasmic segment spans residues 117–123 (EELRPVR). Residues 124–141 (WWRVLPVKFVGGMGTLGA) form a helical membrane-spanning segment. Residues 142 to 147 (GMVLGR) are Periplasmic-facing. Residues 146 to 150 (GREGP) carry the Selectivity filter part_2 motif. Residues 148–166 (EGPTVQIGGNIGRMVLDLF) traverse the membrane as a helical segment. Residues 167–176 (RMRSAEARHT) are Cytoplasmic-facing. 2 consecutive intramembrane regions (helical) follow at residues 177-189 (LLATGAAAGLSAA) and 193-201 (PLAGILFII). The Cytoplasmic segment spans residues 202–214 (EEMRPQFRYNLIS). A helical membrane pass occupies residues 215 to 232 (IKAVFTGVIMSSIVFRIF). Topologically, residues 233–252 (NGEAPIIEVGKLSNAPVNTL) are periplasmic. A helical transmembrane segment spans residues 253–281 (WLYLILGMIFGCVGPLFNHLVLRTQDMFQ). Topologically, residues 282–287 (RFHGGE) are cytoplasmic. A helical membrane pass occupies residues 288–309 (IKKWVLMGGAIGGLCGILGLIE). Residues 310–329 (PEAAGGGFNLIPIAAAGNYS) are Periplasmic-facing. The chain crosses the membrane as a helical span at residues 330-349 (VGLLLFIFIARVLTTLLCFS). Residues 350 to 354 (SGAPG) are Cytoplasmic-facing. The Selectivity filter part_3 signature appears at 355–359 (GIFAP). Residues 355–376 (GIFAPMLALGTLLGTAFGMAAA) form a helical membrane-spanning segment. Chloride-binding residues include Ile356 and Phe357. Residues 377 to 386 (ACFPQYHLEA) are Periplasmic-facing. The helical intramembrane region spans 387 to 401 (GTFAIAGMGALLAAS). Residues 402 to 404 (VRA) constitute an intramembrane region (note=Loop between two helices). Positions 405 to 416 (PLTGIVLVLEMT) form an intramembrane region, helical. An intramembrane region (note=Loop between two helices) is located at residues 417 to 421 (DNYQL). A helical transmembrane segment spans residues 422–438 (ILPMIITCLGATLLAQF). The Cytoplasmic portion of the chain corresponds to 439–473 (MGGKPLYSTILARTLAKQDAEQAAKSQRSVAGENT). Chloride is bound at residue Tyr445.

Belongs to the chloride channel (TC 2.A.49) family. ClcA subfamily. In terms of assembly, homodimer.

It is found in the cell inner membrane. It carries out the reaction 2 chloride(in) + H(+)(out) = 2 chloride(out) + H(+)(in). Proton-coupled chloride transporter. Functions as antiport system and exchanges two chloride ions for 1 proton. Probably acts as an electrical shunt for an outwardly-directed proton pump that is linked to amino acid decarboxylation, as part of the extreme acid resistance (XAR) response. This Citrobacter koseri (strain ATCC BAA-895 / CDC 4225-83 / SGSC4696) protein is H(+)/Cl(-) exchange transporter ClcA.